The following is a 277-amino-acid chain: MKPQNLHFDYGLVEAILVPFIRNEIRKFGFGSVVLGLSGGIDSAVVCELAVRALGVENVLALMMPYKTSSQESLDHAELMVDRLGIRYEIMPVTEVVDAFFATRPDASRLRRGNVMARSRMLCLYDVSARDGCLVLGTSNKTELMLGYGTMFGDMASAVNPIGDLYKTQIFGLARHLGIPAPLIDKPPSADLWEGQSDEADLGFSYEEVDQLLYMMLEERMDRDAILAEGIDSAFYQRVRSMVVRNQYKRMMPVIAKLSSRTPGIDFRYARDWQEVR.

36–43 lines the ATP pocket; sequence GLSGGIDS. Asp42 serves as a coordination point for Mg(2+). Arg118 provides a ligand contact to deamido-NAD(+). Thr138 contributes to the ATP binding site. Residue Glu143 coordinates Mg(2+). 2 residues coordinate ATP: Lys167 and Ser189.

Belongs to the NAD synthetase family. Homodimer.

It carries out the reaction deamido-NAD(+) + NH4(+) + ATP = AMP + diphosphate + NAD(+) + H(+). It functions in the pathway cofactor biosynthesis; NAD(+) biosynthesis; NAD(+) from deamido-NAD(+) (ammonia route): step 1/1. Catalyzes the ATP-dependent amidation of deamido-NAD to form NAD. Uses ammonia as a nitrogen source. This is NH(3)-dependent NAD(+) synthetase from Chlorobaculum tepidum (strain ATCC 49652 / DSM 12025 / NBRC 103806 / TLS) (Chlorobium tepidum).